The sequence spans 129 residues: Lysozyme C, milk isozyme (129 aa).

Residues 1 to 129 (KIFSKCELAR…LSKYLASCNL (129 aa)) form the C-type lysozyme domain. Cystine bridges form between Cys-6/Cys-127, Cys-30/Cys-115, Cys-65/Cys-80, and Cys-76/Cys-94. Residues Glu-35 and Asp-53 contribute to the active site. Ca(2+)-binding residues include Lys-82, Asp-85, Asn-87, Asp-90, and Asp-91.

Belongs to the glycosyl hydrolase 22 family. As to quaternary structure, monomer. Ca(2+) serves as cofactor.

It carries out the reaction Hydrolysis of (1-&gt;4)-beta-linkages between N-acetylmuramic acid and N-acetyl-D-glucosamine residues in a peptidoglycan and between N-acetyl-D-glucosamine residues in chitodextrins.. In terms of biological role, lysozymes have primarily a bacteriolytic function; those in tissues and body fluids are associated with the monocyte-macrophage system and enhance the activity of immunoagents. This is Lysozyme C, milk isozyme from Canis lupus familiaris (Dog).